Here is a 375-residue protein sequence, read N- to C-terminus: Deoxyribonuclease-2 (375 aa).

A signal peptide spans 1-21; sequence MGLSPAAVLIFLLLGVSQTYA. Asn-131 carries N-linked (GlcNAc...) asparagine glycosylation.

It belongs to the DNase II family.

The catalysed reaction is Endonucleolytic cleavage to nucleoside 3'-phosphates and 3'-phosphooligonucleotide end-products.. Hydrolyzes DNA under acidic conditions with a preference for double-stranded DNA. Implicated in apoptosis. The protein is Deoxyribonuclease-2 (nuc-1) of Caenorhabditis elegans.